Here is a 419-residue protein sequence, read N- to C-terminus: Ribosome biogenesis protein WDR12 homolog (419 aa).

Residues 10–91 (VQVHLKTKQE…EDAIEIEYVE (82 aa)) are ubiquitin-like (UBL) domain. 7 WD repeats span residues 103 to 141 (LHDD…LTIP), 142 to 184 (GHTA…NTVE), 191 to 230 (GHER…AGEG), 249 to 287 (GHRE…IKAE), 289 to 328 (STNK…GSVV), 334 to 374 (GHNA…APLY), and 378 to 416 (GHGE…VENM).

It belongs to the WD repeat WDR12/YTM1 family.

It is found in the nucleus. It localises to the nucleolus. Its subcellular location is the nucleoplasm. Functionally, required for maturation of ribosomal RNAs and formation of the large ribosomal subunit. This chain is Ribosome biogenesis protein WDR12 homolog, found in Drosophila persimilis (Fruit fly).